Consider the following 415-residue polypeptide: Sucrose permease (415 aa).

The Cytoplasmic segment spans residues 1-16; sequence MALNIPFRNAYYRFAS. A helical membrane pass occupies residues 17–37; the sequence is SYSFLFFISWSLWWSLYAIWL. Over 38–48 the chain is Periplasmic; it reads KGHLGLTGTEL. Residues 49 to 69 traverse the membrane as a helical segment; the sequence is GTLYSVNQFTSILFMMFYGIV. Over 70 to 77 the chain is Cytoplasmic; sequence QDKLGLKK. Residues 78-98 form a helical membrane-spanning segment; that stretch reads PLIWCMSFILVLTGPFMIYVY. Residues 99 to 107 are Periplasmic-facing; that stretch reads EPLLQSNFS. Residues 108-128 traverse the membrane as a helical segment; sequence VGLILGALFFGLGYLAGCGLL. Topologically, residues 129-147 are cytoplasmic; sequence DSFTEKMARNFHFEYGTAR. Residues 148–167 form a helical membrane-spanning segment; that stretch reads AWGSFGYAIGAFFAGIFFSI. The Periplasmic portion of the chain corresponds to 168 to 170; sequence SPH. A helical transmembrane segment spans residues 171–190; that stretch reads INFWLVSLFGAVFMMINMRF. At 191 to 220 the chain is on the cytoplasmic side; it reads KDKDHQCIAADAGGVKKEDFIAVFKDRNFW. The helical transmembrane segment at 221 to 241 threads the bilayer; the sequence is VFVIFIVGTWSFYNIFDQQLF. Over 242–260 the chain is Periplasmic; that stretch reads PVFYAGLFESHDVGTRLYG. Residues 261-281 form a helical membrane-spanning segment; it reads YLNSFQVVLEALCMAIIPFFV. Topologically, residues 282 to 287 are cytoplasmic; that stretch reads NRVGPK. Residues 288-308 traverse the membrane as a helical segment; the sequence is NALLIGVVIMALRILSCALFV. Topologically, residues 309–311 are periplasmic; the sequence is NPW. The chain crosses the membrane as a helical span at residues 312–332; that stretch reads IISLVKLLHAIEVPLCVISVF. Over 333 to 342 the chain is Cytoplasmic; it reads KYSVANFDKR. The helical transmembrane segment at 343-363 threads the bilayer; that stretch reads LSSTIFLIGFQIASSLGIVLL. Residues 364 to 377 are Periplasmic-facing; sequence STPTGILFDHAGYQ. A helical membrane pass occupies residues 378–398; it reads TVFFAISGIVCLMLLFGIFFL. Residues 399–415 lie on the Cytoplasmic side of the membrane; the sequence is SKKREQIVMETPVPSAI.

This sequence belongs to the major facilitator superfamily. Oligosaccharide:H(+) symporter (OHS) (TC 2.A.1.5) family.

It localises to the cell inner membrane. Its pathway is glycan biosynthesis; sucrose metabolism. Functionally, responsible for transport of sucrose into the cell, with the concomitant import of a proton (symport system). Can also transport maltose, fructose or lactulose, but not glucose, lactose or melibiose. The substrate specificity is directed toward the fructofuranosyl moiety of the substrate. The polypeptide is Sucrose permease (Escherichia coli).